Here is a 620-residue protein sequence, read N- to C-terminus: Glutathione-regulated potassium-efflux system protein KefC (620 aa).

12 consecutive transmembrane segments (helical) span residues 4-24, 26-46, 54-74, 90-110, 114-134, 149-169, 178-198, 218-238, 270-290, 294-314, 327-347, and 359-379; these read HTLL…PIAV, LGLG…PWGL, SILH…GLEL, GALQ…FLGL, VAEL…MQAM, FAVL…IPLL, LGAF…VVVL, VFSA…EEVG, GLLL…GTLV, LRIL…LWLV, WFAV…GAAQ, and ALTL…VLLT. In terms of domain architecture, RCK N-terminal spans 399-518; that stretch reads QPRVIVAGFG…AGVAMPERET (120 aa). Residues 599-620 are disordered; sequence QGTAEGKHSGEVADEPEVKPSI.

Belongs to the monovalent cation:proton antiporter 2 (CPA2) transporter (TC 2.A.37) family. KefC subfamily. In terms of assembly, homodimer. Interacts with the regulatory subunit KefF.

Its subcellular location is the cell inner membrane. Functionally, pore-forming subunit of a potassium efflux system that confers protection against electrophiles. Catalyzes K(+)/H(+) antiport. This Salmonella paratyphi B (strain ATCC BAA-1250 / SPB7) protein is Glutathione-regulated potassium-efflux system protein KefC.